A 74-amino-acid chain; its full sequence is Large ribosomal subunit protein bL27c (74 aa).

It belongs to the bacterial ribosomal protein bL27 family.

The protein resides in the plastid. It localises to the chloroplast. The sequence is that of Large ribosomal subunit protein bL27c (rpl27) from Pleurochrysis haptonemofera (Unicellular marine alga).